A 197-amino-acid polypeptide reads, in one-letter code: ATP-dependent Clp protease proteolytic subunit (197 aa).

The active-site Nucleophile is Ser102. The active site involves His127.

Belongs to the peptidase S14 family. In terms of assembly, fourteen ClpP subunits assemble into 2 heptameric rings which stack back to back to give a disk-like structure with a central cavity, resembling the structure of eukaryotic proteasomes.

The protein localises to the cytoplasm. It catalyses the reaction Hydrolysis of proteins to small peptides in the presence of ATP and magnesium. alpha-casein is the usual test substrate. In the absence of ATP, only oligopeptides shorter than five residues are hydrolyzed (such as succinyl-Leu-Tyr-|-NHMec, and Leu-Tyr-Leu-|-Tyr-Trp, in which cleavage of the -Tyr-|-Leu- and -Tyr-|-Trp bonds also occurs).. Cleaves peptides in various proteins in a process that requires ATP hydrolysis. Has a chymotrypsin-like activity. Plays a major role in the degradation of misfolded proteins. This is ATP-dependent Clp protease proteolytic subunit from Borreliella afzelii (strain PKo) (Borrelia afzelii).